A 282-amino-acid polypeptide reads, in one-letter code: MRTVHSLKELRTILRGYRQQGKTIGLVPTMGNLHEGHISLVRKAAEASDIVVTSIFVNPMQFGANEDLDTYPRTLVEDQEKLAAAGNTLVFAPGVEEIYPEGLANQTKVVVPEVSEGHCGASRPGHFEGVATVVTMLFNMVQPDIAVFGEKDFQQLAVIRKLARDLMIPVEVIGAPTVREDDGLAKSSRNGYLSEQERGIAPVVFRTLRHTADQLAQGRTDYSILEQEARDALSEAGLRPDYFNIVNSLTLKPASKDDRELTLLVAAFLGTTRLIDNLSITR.

30–37 (MGNLHEGH) lines the ATP pocket. The active-site Proton donor is the histidine 37. Glutamine 61 is a binding site for (R)-pantoate. Glutamine 61 contacts beta-alanine. An ATP-binding site is contributed by 149 to 152 (GEKD). Glutamine 155 is a (R)-pantoate binding site. ATP-binding positions include valine 178 and 186-189 (KSSR).

Belongs to the pantothenate synthetase family. Homodimer.

It localises to the cytoplasm. The catalysed reaction is (R)-pantoate + beta-alanine + ATP = (R)-pantothenate + AMP + diphosphate + H(+). The protein operates within cofactor biosynthesis; (R)-pantothenate biosynthesis; (R)-pantothenate from (R)-pantoate and beta-alanine: step 1/1. Functionally, catalyzes the condensation of pantoate with beta-alanine in an ATP-dependent reaction via a pantoyl-adenylate intermediate. The protein is Pantothenate synthetase of Marinobacter nauticus (strain ATCC 700491 / DSM 11845 / VT8) (Marinobacter aquaeolei).